Here is a 91-residue protein sequence, read N- to C-terminus: Elongation factor 1-beta (91 aa).

Belongs to the EF-1-beta/EF-1-delta family.

Its function is as follows. Promotes the exchange of GDP for GTP in EF-1-alpha/GDP, thus allowing the regeneration of EF-1-alpha/GTP that could then be used to form the ternary complex EF-1-alpha/GTP/AAtRNA. This chain is Elongation factor 1-beta, found in Metallosphaera sedula (strain ATCC 51363 / DSM 5348 / JCM 9185 / NBRC 15509 / TH2).